Consider the following 107-residue polypeptide: Translation initiation factor IF-1, chloroplastic (107 aa).

In terms of domain architecture, S1-like spans 8-83 (REKKNPREAK…SKGRIIYRLP (76 aa)). Residues 81 to 107 (RLPHKDSKRTEDSKDTEDLKDTKDSKD) are disordered. Basic and acidic residues predominate over residues 83 to 107 (PHKDSKRTEDSKDTEDLKDTKDSKD).

The protein belongs to the IF-1 family. In terms of assembly, component of the 30S ribosomal translation pre-initiation complex which assembles on the 30S ribosome in the order IF-2 and IF-3, IF-1 and N-formylmethionyl-tRNA(fMet); mRNA recruitment can occur at any time during PIC assembly.

It localises to the plastid. The protein localises to the chloroplast. In terms of biological role, one of the essential components for the initiation of protein synthesis. Stabilizes the binding of IF-2 and IF-3 on the 30S subunit to which N-formylmethionyl-tRNA(fMet) subsequently binds. Helps modulate mRNA selection, yielding the 30S pre-initiation complex (PIC). Upon addition of the 50S ribosomal subunit IF-1, IF-2 and IF-3 are released leaving the mature 70S translation initiation complex. This chain is Translation initiation factor IF-1, chloroplastic, found in Saccharum hybrid (Sugarcane).